Consider the following 718-residue polypeptide: Ribosomal RNA large subunit methyltransferase K/L (718 aa).

A THUMP domain is found at 43–154 (TQYRILLWSR…QDELVVSLDL (112 aa)).

It belongs to the methyltransferase superfamily. RlmKL family.

Its subcellular location is the cytoplasm. The enzyme catalyses guanosine(2445) in 23S rRNA + S-adenosyl-L-methionine = N(2)-methylguanosine(2445) in 23S rRNA + S-adenosyl-L-homocysteine + H(+). It carries out the reaction guanosine(2069) in 23S rRNA + S-adenosyl-L-methionine = N(2)-methylguanosine(2069) in 23S rRNA + S-adenosyl-L-homocysteine + H(+). Specifically methylates the guanine in position 2445 (m2G2445) and the guanine in position 2069 (m7G2069) of 23S rRNA. The protein is Ribosomal RNA large subunit methyltransferase K/L of Histophilus somni (strain 129Pt) (Haemophilus somnus).